Reading from the N-terminus, the 185-residue chain is Large ribosomal subunit protein bL25 (185 aa).

It belongs to the bacterial ribosomal protein bL25 family. CTC subfamily. As to quaternary structure, part of the 50S ribosomal subunit; part of the 5S rRNA/L5/L18/L25 subcomplex. Contacts the 5S rRNA. Binds to the 5S rRNA independently of L5 and L18.

In terms of biological role, this is one of the proteins that binds to the 5S RNA in the ribosome where it forms part of the central protuberance. This chain is Large ribosomal subunit protein bL25, found in Chlamydia pneumoniae (Chlamydophila pneumoniae).